The sequence spans 134 residues: Putative esterase PA0474 (134 aa).

The protein belongs to the thioesterase PaaI family.

This is Putative esterase PA0474 from Pseudomonas aeruginosa (strain ATCC 15692 / DSM 22644 / CIP 104116 / JCM 14847 / LMG 12228 / 1C / PRS 101 / PAO1).